We begin with the raw amino-acid sequence, 215 residues long: Pyrrolidone-carboxylate peptidase (215 aa).

Residues E80, C143, and H167 contribute to the active site.

It belongs to the peptidase C15 family. As to quaternary structure, homotetramer.

The protein resides in the cytoplasm. It catalyses the reaction Release of an N-terminal pyroglutamyl group from a polypeptide, the second amino acid generally not being Pro.. Its function is as follows. Removes 5-oxoproline from various penultimate amino acid residues except L-proline. This chain is Pyrrolidone-carboxylate peptidase, found in Bacillus cereus (strain AH820).